The chain runs to 454 residues: L-cysteine desulfhydrase-like protein lolT1 (454 aa).

Position 227 is an N6-(pyridoxal phosphate)lysine (Lys227).

It belongs to the class-V pyridoxal-phosphate-dependent aminotransferase family. Requires pyridoxal 5'-phosphate as cofactor.

Its pathway is alkaloid biosynthesis. Its function is as follows. L-cysteine desulfhydrase-like protein; part of the gene cluster that mediates the biosynthesis of loline alkaloids, potent insecticidal agents composed of a pyrrolizidine ring system and an uncommon ether bridge linking carbons 2 and 7. Lolines are structurally differentiated by the various modifications of the L-amino group and include norloline, loline, N-methylloline, N-acetylloline, N-acetylnorloline, and N-formylloline. The first committed step is the condensation of O-acetyl-L-homoserine (derived from L-aspartic acid) and L-proline, probably catalyzed by the gamma-type pyridoxal 5'-phosphate(PLP)-dependent enzyme lolC, to give the diamino diacid, NACPP. Ensuing cyclization, decarboxylation, and acetylation steps yield 1-exo-acetamidopyrrolizidine (AcAP). LolO is required for installation of the ether bridge upon the pathway intermediate, 1-exo-acetamidopyrrolizidine (AcAP). In sequential 2-oxoglutarate- and O(2)-consuming steps, lolO removes hydrogens from C2 and C7 of AcAP to form both carbon-oxygen bonds in N-acetylnorloline (NANL), the precursor to all other lolines. The enzymes lolD, lolE, lolF and lolT have also been proposed to be involved in the ether-bridge installation. Further processing of the exocyclic moiety of NANL by fungal N-acetamidase (LolN), methyltransferase (LolM), and cytochrome P450 (LolP) enzymes, with occasional involvement of a plant acetyltransferase, generates the other known lolines. LolN transforms NANL to norlonine which is monomethylated and dimethylated to respectively lonine and N-methyllonine (NML) by lolM. LolP catalyzes hydroxylation of the methyl group in N-methylloline (NML) and further oxygenation to N-formylloline (NFL). A plant acetyltransferase is responsible for the acetylation of loline to form N-acetylloline (NAL). LolA might interact with aspartate kinase to prevent feedback inhibition of its activity by these end products and thereby promote production of L-homoserine from L-aspartate. This Epichloe uncinata (Endophyte fungus) protein is L-cysteine desulfhydrase-like protein lolT1.